Here is a 685-residue protein sequence, read N- to C-terminus: Pentatricopeptide repeat-containing protein At5g19020, mitochondrial (685 aa).

A mitochondrion-targeting transit peptide spans 1–23 (MIKLIRFFRSRRCWVISLQARCF). PPR repeat units follow at residues 40–74 (TERALVSALGSCASSNDVTCGRQIHCRVLKSGLDS), 75–105 (NGYICNSVLNMYAKCRLLADAESVFRDHAKL), 106–136 (DSASFNIMVDGYVRSRRLWDALKLFDVMPER), 137–171 (SCVSYTTLIKGYAQNNQWSEAMELFREMRNLGIML), 172–206 (NEVTLATVISACSHLGGIWDCRMLQSLAIKLKLEG), 207–237 (RVFVSTNLLHMYCLCLCLKDARKLFDEMPER), 238–268 (NLVTWNVMLNGYSKAGLIEQAEELFDQITEK), 269–303 (DIVSWGTMIDGCLRKNQLDEALVYYTEMLRCGMKP), 304–338 (SEVMMVDLLSASARSVGSSKGLQLHGTIVKRGFDC), 339–369 (YDFLQATIIHFYAVSNDIKLALQQFEASVKD), 370–400 (HIASRNALIAGFVKNGMVEQAREVFDQTHDK), 401–435 (DIFSWNAMISGYAQSLSPQLALHLFREMISSSQVK), 437–471 (DAITMVSVFSAISSLGSLEEGKRAHDYLNFSTIPP), 472–502 (NDNLTAAIIDMYAKCGSIETALNIFHQTKNI), 506–540 (TISPWNAIICGSATHGHAKLALDLYSDLQSLPIKP), 541–576 (NSITFVGVLSACCHAGLVELGKTYFESMKSDHGIEP), and 577–607 (DIKHYGCMVDLLGKAGRLEEAKEMIKKMPVK). The interval 612-685 (IWGMLLSASR…EWSRAFSGVV (74 aa)) is type E motif; degenerate.

It belongs to the PPR family. PCMP-E subfamily.

It is found in the mitochondrion. This is Pentatricopeptide repeat-containing protein At5g19020, mitochondrial (PCMP-E42) from Arabidopsis thaliana (Mouse-ear cress).